We begin with the raw amino-acid sequence, 330 residues long: GTPase Obg (330 aa).

The Obg domain maps to 1 to 159; that stretch reads MHFIDEVKIY…MWIHLRLKLL (159 aa). The OBG-type G domain maps to 160–327; that stretch reads SDVGLVGLPN…IVKLALEIIK (168 aa). GTP contacts are provided by residues 166 to 173, 191 to 195, 212 to 215, 279 to 282, and 308 to 310; these read GLPNAGKS, FTTLV, DIPG, NKCD, and STY. Positions 173 and 193 each coordinate Mg(2+).

Belongs to the TRAFAC class OBG-HflX-like GTPase superfamily. OBG GTPase family. Monomer. Mg(2+) is required as a cofactor.

The protein localises to the cytoplasm. An essential GTPase which binds GTP, GDP and possibly (p)ppGpp with moderate affinity, with high nucleotide exchange rates and a fairly low GTP hydrolysis rate. Plays a role in control of the cell cycle, stress response, ribosome biogenesis and in those bacteria that undergo differentiation, in morphogenesis control. The chain is GTPase Obg from Rickettsia typhi (strain ATCC VR-144 / Wilmington).